The chain runs to 406 residues: Multifunctional CCA protein (406 aa).

Positions 8 and 11 each coordinate ATP. CTP is bound by residues glycine 8 and arginine 11. Mg(2+) is bound by residues aspartate 21 and aspartate 23. ATP-binding residues include arginine 91, arginine 137, and arginine 140. The CTP site is built by arginine 91, arginine 137, and arginine 140. An HD domain is found at threonine 228 to tryptophan 329.

Belongs to the tRNA nucleotidyltransferase/poly(A) polymerase family. Bacterial CCA-adding enzyme type 1 subfamily. Monomer. Can also form homodimers and oligomers. Mg(2+) is required as a cofactor. The cofactor is Ni(2+).

It carries out the reaction a tRNA precursor + 2 CTP + ATP = a tRNA with a 3' CCA end + 3 diphosphate. It catalyses the reaction a tRNA with a 3' CCA end + 2 CTP + ATP = a tRNA with a 3' CCACCA end + 3 diphosphate. Functionally, catalyzes the addition and repair of the essential 3'-terminal CCA sequence in tRNAs without using a nucleic acid template. Adds these three nucleotides in the order of C, C, and A to the tRNA nucleotide-73, using CTP and ATP as substrates and producing inorganic pyrophosphate. tRNA 3'-terminal CCA addition is required both for tRNA processing and repair. Also involved in tRNA surveillance by mediating tandem CCA addition to generate a CCACCA at the 3' terminus of unstable tRNAs. While stable tRNAs receive only 3'-terminal CCA, unstable tRNAs are marked with CCACCA and rapidly degraded. This is Multifunctional CCA protein from Vibrio parahaemolyticus serotype O3:K6 (strain RIMD 2210633).